Consider the following 336-residue polypeptide: MAKLQLGYKASAEQFGPRELVEIAVAAEAAGMDSVAVSDHFQPWRVNGGHAPFSLAWMAAVGERTERVKIGTSVMTPTFRYNPAVIAQAFASMACMYPDRIFLGVGSGEALNEYATGFQGEWPEFKERFARLRESVRLMRELWSGEISNFDGDYYHTKDAVLFDIPERPVPVYIAAGGPVVAKYAGRAGDGMICTSGKGMDLYTEKLIPAAKEGAELGGRDFDALDKMIEIKISYDPDPELALENTRFWAPLSLTAEQKHSVNSSAEMERLADELPIEQVAKRWIVASDPDEAVAAVKQYTDAGLNHLVFHAPGHDQRRFLDNFQRDLEPRLRALG.

Asp-39 is a binding site for coenzyme F420-(gamma-Glu)n. His-40 functions as the Proton donor in the catalytic mechanism. Coenzyme F420-(gamma-Glu)n is bound by residues Thr-76 and 107–108 (SG). Glu-109 (proton acceptor) is an active-site residue. Coenzyme F420-(gamma-Glu)n is bound by residues Asn-112, 177–178 (GG), and 180–181 (VV). Thr-195, Lys-198, Lys-259, and Arg-283 together coordinate substrate.

Belongs to the F420-dependent glucose-6-phosphate dehydrogenase family. As to quaternary structure, homodimer.

It catalyses the reaction oxidized coenzyme F420-(gamma-L-Glu)(n) + D-glucose 6-phosphate + H(+) = 6-phospho-D-glucono-1,5-lactone + reduced coenzyme F420-(gamma-L-Glu)(n). Catalyzes the coenzyme F420-dependent oxidation of glucose 6-phosphate (G6P) to 6-phosphogluconolactone. The sequence is that of F420-dependent glucose-6-phosphate dehydrogenase from Tsukamurella paurometabola (strain ATCC 8368 / DSM 20162 / CCUG 35730 / CIP 100753 / JCM 10117 / KCTC 9821 / NBRC 16120 / NCIMB 702349 / NCTC 13040) (Corynebacterium paurometabolum).